The chain runs to 599 residues: Elongation factor 4 (599 aa).

One can recognise a tr-type G domain in the interval 5-187; it reads NHIRNFSIIA…QIVQLVPPPE (183 aa). GTP-binding positions include 17-22 and 134-137; these read DHGKST and NKMD.

This sequence belongs to the TRAFAC class translation factor GTPase superfamily. Classic translation factor GTPase family. LepA subfamily.

Its subcellular location is the cell inner membrane. The enzyme catalyses GTP + H2O = GDP + phosphate + H(+). Required for accurate and efficient protein synthesis under certain stress conditions. May act as a fidelity factor of the translation reaction, by catalyzing a one-codon backward translocation of tRNAs on improperly translocated ribosomes. Back-translocation proceeds from a post-translocation (POST) complex to a pre-translocation (PRE) complex, thus giving elongation factor G a second chance to translocate the tRNAs correctly. Binds to ribosomes in a GTP-dependent manner. The sequence is that of Elongation factor 4 from Hahella chejuensis (strain KCTC 2396).